The sequence spans 205 residues: Pyridoxal 5'-phosphate synthase subunit PdxT (205 aa).

53-55 contacts L-glutamine; sequence GES. Catalysis depends on Cys85, which acts as the Nucleophile. L-glutamine is bound by residues Arg112 and 140–141; that span reads IR. Active-site charge relay system residues include His176 and Glu178.

The protein belongs to the glutaminase PdxT/SNO family. In terms of assembly, in the presence of PdxS, forms a dodecamer of heterodimers. Only shows activity in the heterodimer.

The enzyme catalyses aldehydo-D-ribose 5-phosphate + D-glyceraldehyde 3-phosphate + L-glutamine = pyridoxal 5'-phosphate + L-glutamate + phosphate + 3 H2O + H(+). The catalysed reaction is L-glutamine + H2O = L-glutamate + NH4(+). It functions in the pathway cofactor biosynthesis; pyridoxal 5'-phosphate biosynthesis. Functionally, catalyzes the hydrolysis of glutamine to glutamate and ammonia as part of the biosynthesis of pyridoxal 5'-phosphate. The resulting ammonia molecule is channeled to the active site of PdxS. The protein is Pyridoxal 5'-phosphate synthase subunit PdxT of Haloquadratum walsbyi (strain DSM 16790 / HBSQ001).